Reading from the N-terminus, the 173-residue chain is Protein SUGARY ENHANCER 1 (173 aa).

Residues 1-31 form a disordered region; that stretch reads MIRPAPWVGAGHRGRGGEAGACTESLGSESG.

This sequence belongs to the fantastic four family.

In terms of biological role, involved in starch metabolism in endosperm. Acts as a modifier of SUGARY1 (SU1), an isoamylase starch-debranching enzyme involved in amylopectin biosynthesis in endosperm. This chain is Protein SUGARY ENHANCER 1, found in Zea mays (Maize).